The chain runs to 320 residues: Cytochrome f (320 aa).

Positions 1-35 (MRNINTYDWMKKWMTRSISILVMIHMITRTSISNA) are cleaved as a signal peptide. Heme-binding residues include tyrosine 36, cysteine 56, cysteine 59, and histidine 60. A helical transmembrane segment spans residues 286 to 306 (VQGLLLLLASVILAQIFLVLK).

It belongs to the cytochrome f family. In terms of assembly, the 4 large subunits of the cytochrome b6-f complex are cytochrome b6, subunit IV (17 kDa polypeptide, petD), cytochrome f and the Rieske protein, while the 4 small subunits are PetG, PetL, PetM and PetN. The complex functions as a dimer. It depends on heme as a cofactor.

The protein resides in the plastid. Its subcellular location is the chloroplast thylakoid membrane. In terms of biological role, component of the cytochrome b6-f complex, which mediates electron transfer between photosystem II (PSII) and photosystem I (PSI), cyclic electron flow around PSI, and state transitions. The protein is Cytochrome f of Cycas taitungensis (Prince sago).